A 731-amino-acid chain; its full sequence is Gelsolin (731 aa).

The segment at 2–125 (VVEHPEFLKA…YKKGGVASGF (124 aa)) is actin-severing. A Gelsolin-like 1 repeat occupies 25-107 (FDLVPVPPNL…VQGFESATFL (83 aa)). Tyr35 carries the post-translational modification Phosphotyrosine. Ca(2+)-binding residues include Gly41, Asp42, Glu73, Asp85, Gly90, and Ala92. Positions 72–75 (DESG) are actin-actin interfilament contact point. 111–118 (KSGLKYKK) contributes to the a 1,2-diacyl-sn-glycero-3-phospho-(1D-myo-inositol-4,5-bisphosphate) binding site. Residue Val121 coordinates Ca(2+). 137–145 (RLFQVKGRR) contributes to the a 1,2-diacyl-sn-glycero-3-phospho-(1D-myo-inositol-4,5-bisphosphate) binding site. The Gelsolin-like 2 repeat unit spans residues 147–219 (VRATEVPVSW…SEEGAEPEAM (73 aa)). Residues Gly162 and Asp163 each coordinate Ca(2+). Cys164 and Cys177 are oxidised to a cystine. Glu185 is a binding site for Ca(2+). A compositionally biased stretch (basic and acidic residues) spans 197-211 (RDNERSGRARVHVSE). The interval 197–216 (RDNERSGRARVHVSEEGAEP) is disordered. Residues Asp235, Glu278, Asp279, and Glu303 each coordinate Ca(2+). One copy of the Gelsolin-like 3 repeat lies at 266-338 (DENPFAQGAL…LPEGGETPLF (73 aa)). Tyr358 and Tyr414 each carry phosphotyrosine. The interval 383-731 (AAQHGMDDDG…LDRALAELAA (349 aa)) is actin-binding, Ca-sensitive. The Gelsolin-like 4 repeat unit spans residues 404 to 485 (SDKVPVDPAT…VQGKEPAHLM (82 aa)). Ca(2+)-binding residues include Gly420, Asp421, Glu451, Asp463, Gly468, Pro470, and Thr500. The stretch at 527–591 (AVEVMPKAGA…AEGSEPDSFW (65 aa)) is one Gelsolin-like 5 repeat. N6-acetyllysine is present on Lys533. The Ca(2+) site is built by Asn540 and Asp541. A Phosphotyrosine modification is found at Tyr552. Glu563 contacts Ca(2+). Phosphotyrosine is present on Tyr600. Residues 630–705 (IEEVPGELMQ…VKQGFEPPSF (76 aa)) form a Gelsolin-like 6 repeat. 3 residues coordinate Ca(2+): Asp645, Asp646, and Glu668. At Thr691 the chain carries Phosphothreonine.

Belongs to the villin/gelsolin family. Binds to actin and to fibronectin. Identified in a complex composed of ACTA1, COBL, GSN and TMSB4X. Interacts with the inactive form of EIF2AK2/PKR. Interacts with FLII.

Its subcellular location is the cytoplasm. The protein localises to the cytoskeleton. In terms of biological role, calcium-regulated, actin-modulating protein that binds to the plus (or barbed) ends of actin monomers or filaments, preventing monomer exchange (end-blocking or capping). It can promote the assembly of monomers into filaments (nucleation) as well as sever filaments already formed. Plays a role in ciliogenesis. The chain is Gelsolin (GSN) from Bos taurus (Bovine).